The primary structure comprises 355 residues: IgG receptor FcRn large subunit p51 (355 aa).

The first 24 residues, 1 to 24 (MRVPRSQPWGLALLLLLLPGTLRA), serve as a signal peptide directing secretion. Residues 25–111 (AESHRSLLYH…ALKVFGDRDS (87 aa)) are alpha-1. Residues 25–300 (AESHRSLLYH…LESPAKSSVP (276 aa)) lie on the Extracellular side of the membrane. The alpha-2 stretch occupies residues 112–201 (YTLQGLLGCE…ERGRGNLEWK (90 aa)). Residue Asn126 is glycosylated (N-linked (GlcNAc...) asparagine). The alpha-3 stretch occupies residues 202–291 (EPPSMRLKAR…GPAQPLTVEL (90 aa)). The Ig-like C1-type domain occupies 203–292 (PPSMRLKARP…PAQPLTVELE (90 aa)). An intrachain disulfide couples Cys222 to Cys276. The segment at 293-298 (SPAKSS) is connecting peptide. Residues 301–321 (VIGISIGFLLLMTVAAGGALL) form a helical membrane-spanning segment. The Cytoplasmic portion of the chain corresponds to 322-355 (WRRRKGLPAPWIAFRGDDIGALLPTPGLSKDAES).

It belongs to the immunoglobulin superfamily. FcRn complex consists of two subunits: p51, and p14 which is equivalent to beta-2-microglobulin. It forms an MHC class I-like heterodimer. Interacts with albumin/ALB; this interaction regulates ALB homeostasis. In terms of tissue distribution, expressed in liver and mammary gland of non-lactating animals. Expressed in hepatocytes and in epithelial cells of portal bile ductuli. Not expressed in the brances of portal veins or hepatic arteries. Expressed in the epithelial cells of the acini and ducti in the mammary gland with expression emphasized at the apical side. Not expressed in blood vessels of mammary gland.

It is found in the cell membrane. Its subcellular location is the endosome membrane. In terms of biological role, cell surface receptor that transfers passive humoral immunity from the mother to the newborn. Binds to the Fc region of monomeric immunoglobulin gamma and mediates its selective uptake from milk. IgG in the milk is bound at the apical surface of the intestinal epithelium. The resultant FcRn-IgG complexes are transcytosed across the intestinal epithelium and IgG is released from FcRn into blood or tissue fluids. Throughout life, contributes to effective humoral immunity by recycling IgG and extending its half-life in the circulation. Mechanistically, monomeric IgG binding to FcRn in acidic endosomes of endothelial and hematopoietic cells recycles IgG to the cell surface where it is released into the circulation. In addition of IgG, regulates homeostasis of the other most abundant circulating protein albumin/ALB. In Camelus dromedarius (Dromedary), this protein is IgG receptor FcRn large subunit p51.